We begin with the raw amino-acid sequence, 732 residues long: Prolyl tripeptidyl peptidase (732 aa).

The first 24 residues, 1-24 (MKKTIFQQLFLSVCALTVALPCSA), serve as a signal peptide directing secretion. Catalysis depends on charge relay system residues Ser603, Asp678, and His710.

This sequence belongs to the peptidase S9B family.

It catalyses the reaction Hydrolysis of Xaa-Xaa-Pro-|-Yaa- releasing the N-terminal tripeptide of a peptide with Pro as the third residue (position P1) and where Yaa is not proline.. In terms of biological role, serine proteinase. Releases tripeptides from the free amino terminus of proteins. Has a requirement for Pro in the P1 position, but is inactivated by Pro in the P1' position. The protein is Prolyl tripeptidyl peptidase of Porphyromonas gingivalis (strain ATCC 33277 / DSM 20709 / CIP 103683 / JCM 12257 / NCTC 11834 / 2561).